A 156-amino-acid polypeptide reads, in one-letter code: C-type lectin lectoxin-Phi2 (156 aa).

The signal sequence occupies residues 1 to 23; it reads MGRFIFVSLGLLVLAFSLSGIGA. Cystine bridges form between cysteine 27-cysteine 38, cysteine 55-cysteine 154, and cysteine 129-cysteine 146. Positions 34–155 constitute a C-type lectin domain; it reads HNVSCYKLIN…CNRRHRFLCK (122 aa). N-linked (GlcNAc...) asparagine glycans are attached at residues asparagine 35 and asparagine 109. The short motif at 119 to 121 is the Mannose-binding element; that stretch reads EPN. 3 residues coordinate Ca(2+): glutamate 127, asparagine 142, and aspartate 143.

Belongs to the true venom lectin family. In terms of tissue distribution, expressed by the venom gland.

The protein localises to the secreted. Mannose-binding lectin which recognizes specific carbohydrate structures and agglutinates a variety of animal cells by binding to cell-surface glycoproteins and glycolipids. May be a calcium-dependent lectin. The protein is C-type lectin lectoxin-Phi2 of Philodryas olfersii (Green snake).